The primary structure comprises 610 residues: tRNA uridine 5-carboxymethylaminomethyl modification enzyme MnmG (610 aa).

Residue 14 to 19 coordinates FAD; the sequence is GAGHAG. 274-288 contacts NAD(+); the sequence is GPRYCPSIEDKIVKF.

It belongs to the MnmG family. As to quaternary structure, homodimer. Heterotetramer of two MnmE and two MnmG subunits. FAD serves as cofactor.

Its subcellular location is the cytoplasm. In terms of biological role, NAD-binding protein involved in the addition of a carboxymethylaminomethyl (cmnm) group at the wobble position (U34) of certain tRNAs, forming tRNA-cmnm(5)s(2)U34. The polypeptide is tRNA uridine 5-carboxymethylaminomethyl modification enzyme MnmG (Chlamydia muridarum (strain MoPn / Nigg)).